A 227-amino-acid chain; its full sequence is Protein LppM (227 aa).

A signal peptide spans Met-1–Gly-24. A lipid anchor (N-palmitoyl cysteine) is attached at Cys-25. Cys-25 is lipidated: S-diacylglycerol cysteine. Residues Leu-26–Ser-185 are important for bacterial uptake by host macrophages. A helical membrane pass occupies residues Gly-190 to Ile-210.

Post-translationally, a shorter form (about 20 kDa) is secreted; upon overexpression of the whole protein in M.smegmatis the C-terminus of the short form is about residue 187, suggesting it is generated by cleavage of the protein before its C-terminal transmembrane domain.

The protein localises to the membrane. The protein resides in the secreted. It is found in the cell wall. A putative lipoprotein that seems to be specialized for the initial steps of macrophage infection. A non-acylated fragment (residues 26-185) binds phosphatidyl-myo-inositol mannosides (PIMs). Limits, in a TLR2-dependent fashion, bacterial uptake by host (mouse); this effect may be mediated by nonacylated fragment 26-185. Plays a TLR2-dependent role in host phagosome maturation arrest. Plays a TLR2-independent role in chemokine production during the first 24 hours of mouse infection. The sequence is that of Protein LppM (lppM) from Mycobacterium tuberculosis (strain ATCC 25618 / H37Rv).